Reading from the N-terminus, the 298-residue chain is ATP phosphoribosyltransferase (298 aa).

Belongs to the ATP phosphoribosyltransferase family. Long subfamily. The cofactor is Mg(2+).

It localises to the cytoplasm. The enzyme catalyses 1-(5-phospho-beta-D-ribosyl)-ATP + diphosphate = 5-phospho-alpha-D-ribose 1-diphosphate + ATP. It participates in amino-acid biosynthesis; L-histidine biosynthesis; L-histidine from 5-phospho-alpha-D-ribose 1-diphosphate: step 1/9. With respect to regulation, feedback inhibited by histidine. Catalyzes the condensation of ATP and 5-phosphoribose 1-diphosphate to form N'-(5'-phosphoribosyl)-ATP (PR-ATP). Has a crucial role in the pathway because the rate of histidine biosynthesis seems to be controlled primarily by regulation of HisG enzymatic activity. This is ATP phosphoribosyltransferase from Tolumonas auensis (strain DSM 9187 / NBRC 110442 / TA 4).